The sequence spans 496 residues: Ammonium transporter 1 member 2 (496 aa).

11 consecutive transmembrane segments (helical) span residues 39–59 (LLFS…LCAG), 74–94 (VLDA…FAFG), 120–140 (FFLF…GSIA), 148–168 (YLIY…HWIW), 192–212 (FAGS…GALI), 236–256 (LVVL…PGSF), 274–296 (SAVG…TTLF), 307–327 (VIDV…GCSV), 331–351 (WAAI…NALA), 360–380 (LEAA…TALF), and 412–432 (IVVI…LFLV).

It belongs to the ammonia transporter channel (TC 1.A.11.2) family. As to expression, expressed in exodermis, sclerenchyma, endodermis and pericycle cells of primary root tips.

The protein resides in the membrane. Ammonium transporter probably involved in ammonium uptake from the soil and ammonium uptake and retrieval in the vascular system. The sequence is that of Ammonium transporter 1 member 2 (AMT1-2) from Oryza sativa subsp. japonica (Rice).